Consider the following 398-residue polypeptide: LL-diaminopimelate aminotransferase (398 aa).

Substrate is bound by residues Tyr14 and Gly41. Residues Tyr71, 104–105, Tyr128, Asn174, Tyr205, and 233–235 contribute to the pyridoxal 5'-phosphate site; these read AK and SFS. Positions 105, 128, and 174 each coordinate substrate. Residue Lys236 is modified to N6-(pyridoxal phosphate)lysine. Pyridoxal 5'-phosphate-binding residues include Arg244 and Asn275. 2 residues coordinate substrate: Asn275 and Arg368.

It belongs to the class-I pyridoxal-phosphate-dependent aminotransferase family. LL-diaminopimelate aminotransferase subfamily. As to quaternary structure, homodimer. Pyridoxal 5'-phosphate serves as cofactor.

It carries out the reaction (2S,6S)-2,6-diaminopimelate + 2-oxoglutarate = (S)-2,3,4,5-tetrahydrodipicolinate + L-glutamate + H2O + H(+). It participates in amino-acid biosynthesis; L-lysine biosynthesis via DAP pathway; LL-2,6-diaminopimelate from (S)-tetrahydrodipicolinate (aminotransferase route): step 1/1. In terms of biological role, involved in the synthesis of meso-diaminopimelate (m-DAP or DL-DAP), required for both lysine and peptidoglycan biosynthesis. Catalyzes the direct conversion of tetrahydrodipicolinate to LL-diaminopimelate. This Chlamydia felis (strain Fe/C-56) (Chlamydophila felis) protein is LL-diaminopimelate aminotransferase.